A 3507-amino-acid polypeptide reads, in one-letter code: Dynein axonemal heavy chain 14 (3507 aa).

The segment at 91–126 (PHLPGTQDPLRRVRDPTPIVASSPGRRRGSWSGGYG) is disordered. A coiled-coil region spans residues 354–381 (DEFCEEQLQQATQALKQLEDIRNKAISE). Residues 1164–1171 (GPAGTGKT) carry the GPAGTGKT motif motif. ATP contacts are provided by residues 1164 to 1171 (GPAGTGKT) and 1427 to 1434 (GPTGGGKT). Asparagine 1818 is a glycosylation site (N-linked (GlcNAc...) asparagine).

It belongs to the dynein heavy chain family. As to quaternary structure, consists of at least two heavy chains and a number of intermediate and light chains.

It localises to the cytoplasm. The protein resides in the cytoskeleton. It is found in the cilium axoneme. Functionally, force generating protein of respiratory cilia. Produces force towards the minus ends of microtubules. Dynein has ATPase activity; the force-producing power stroke is thought to occur on release of ADP. Involved in sperm motility; implicated in sperm flagellar assembly. This Homo sapiens (Human) protein is Dynein axonemal heavy chain 14 (DNAH14).